A 221-amino-acid chain; its full sequence is Catechol O-methyltransferase (221 aa).

Val-41, Gly-65, Leu-67, Ser-71, Glu-89, His-94, Ala-118, and Asp-139 together coordinate S-adenosyl-L-methionine. Asp-139, Asp-165, and Asn-166 together coordinate Mg(2+).

This sequence belongs to the class I-like SAM-binding methyltransferase superfamily. Cation-dependent O-methyltransferase family. As to quaternary structure, homodimer. Requires Mg(2+) as cofactor.

It catalyses the reaction a catechol + S-adenosyl-L-methionine = a guaiacol + S-adenosyl-L-homocysteine + H(+). The metal ion affects the meta and para-regiospecificity of the enzyme as well as the enzyme activity and thermal stability. Functionally, catechol O-methyltransferase that can use various catechol-like compounds. Can produce vanillic acid (meta-form) and iso-vanillic acid (para-form) from protocatechuic acid (PCA). Does not have a regiospecificity, and produces the meta- and para-forms of the products in equal proportion. In Niastella koreensis (strain DSM 17620 / KACC 11465 / NBRC 106392 / GR20-10), this protein is Catechol O-methyltransferase.